Consider the following 275-residue polypeptide: MRPLQAEIIKALGVQATIDPETEVRRSVDFLKAYLKKNTFLKTYVLGISGGQDSSLAGALTEKAMQEMRAETGDDAYQFIAVRLPYGEQADEADAMAAIDFMHADVVKRVNIKPSVDAMVAAVEADGSKISDFNKGNIKARMRMIAQYAIAGNNAGAVIGTDHAAEAVTGFYTKFGDGGADLTPLYRLDKRQGAALLKVLGAPAHLYEKAPTADLEDNRPALPDEVALGVKYKDIDDYLEGKDVTDQAAETIEKWYQKTAHKRHLPITVFDNFWK.

47 to 54 (GISGGQDS) is a binding site for ATP. Asp53 serves as a coordination point for Mg(2+). Arg141 is a deamido-NAD(+) binding site. Residue Thr161 coordinates ATP. Glu166 provides a ligand contact to Mg(2+). Residues Lys174 and Asp181 each contribute to the deamido-NAD(+) site. The ATP site is built by Lys190 and Thr212. 261 to 262 (HK) contacts deamido-NAD(+).

This sequence belongs to the NAD synthetase family. As to quaternary structure, homodimer.

It carries out the reaction deamido-NAD(+) + NH4(+) + ATP = AMP + diphosphate + NAD(+) + H(+). It functions in the pathway cofactor biosynthesis; NAD(+) biosynthesis; NAD(+) from deamido-NAD(+) (ammonia route): step 1/1. Its function is as follows. Catalyzes the ATP-dependent amidation of deamido-NAD to form NAD. Uses ammonia as a nitrogen source. The chain is NH(3)-dependent NAD(+) synthetase from Lacticaseibacillus paracasei (strain ATCC 334 / BCRC 17002 / CCUG 31169 / CIP 107868 / KCTC 3260 / NRRL B-441) (Lactobacillus paracasei).